Here is a 473-residue protein sequence, read N- to C-terminus: Ribulose bisphosphate carboxylase large chain (473 aa).

2 residues coordinate substrate: asparagine 116 and threonine 166. Catalysis depends on lysine 168, which acts as the Proton acceptor. Lysine 170 is a substrate binding site. 3 residues coordinate Mg(2+): lysine 194, aspartate 196, and glutamate 197. Position 194 is an N6-carboxylysine (lysine 194). Histidine 287 (proton acceptor) is an active-site residue. Substrate is bound by residues arginine 288, histidine 320, and serine 372.

It belongs to the RuBisCO large chain family. Type I subfamily. As to quaternary structure, heterohexadecamer of 8 large chains and 8 small chains. Mg(2+) is required as a cofactor.

The enzyme catalyses 2 (2R)-3-phosphoglycerate + 2 H(+) = D-ribulose 1,5-bisphosphate + CO2 + H2O. It carries out the reaction D-ribulose 1,5-bisphosphate + O2 = 2-phosphoglycolate + (2R)-3-phosphoglycerate + 2 H(+). In terms of biological role, ruBisCO catalyzes two reactions: the carboxylation of D-ribulose 1,5-bisphosphate, the primary event in carbon dioxide fixation, as well as the oxidative fragmentation of the pentose substrate. Both reactions occur simultaneously and in competition at the same active site. The polypeptide is Ribulose bisphosphate carboxylase large chain (Nitrobacter winogradskyi (Nitrobacter agilis)).